The chain runs to 174 residues: MKHTLSVLVQDEAGVLSRISGLFARRGFNIASLAVGPAEQIGVSRITMVVQGDNRTIEQLTKQLYKLVNILNVQDVTNIPSVERELMLIKIQVNSQNRIEALEIVKIFRANVVDIAEDLIIVEVTGDPGKIVAIEQLLTKFGIIEIARTGKISLVRTSKINTEYLKDKVVAYNA.

The ACT domain maps to 4–78 (TLSVLVQDEA…NILNVQDVTN (75 aa)).

This sequence belongs to the acetolactate synthase small subunit family. As to quaternary structure, dimer of large and small chains.

The protein localises to the plastid. The protein resides in the chloroplast. The enzyme catalyses 2 pyruvate + H(+) = (2S)-2-acetolactate + CO2. It functions in the pathway amino-acid biosynthesis; L-isoleucine biosynthesis; L-isoleucine from 2-oxobutanoate: step 1/4. Its pathway is amino-acid biosynthesis; L-valine biosynthesis; L-valine from pyruvate: step 1/4. The protein is Acetolactate synthase small subunit (ilvH) of Porphyra purpurea (Red seaweed).